The following is a 237-amino-acid chain: MSNKDIFVKISGSKKIREAREKVKSDTLYNLTSAVERLKSASYVKFDPTLEIVMKLGIDPRHSDQIVRGVVNLPAGTGKIIRVAVICKEEREEEAKSAGADLVGSINIIDEIKSGQINFDVCIATPDMMSMISSVARILGPKGLMPNPKLGTVTLDIKNAIKNAKSGQVEYRAEKAGIIHAGLGKLSFSDQDLLKNLNAFIGAVIKAKPVGLKGSYLKAIYLSSTMGASVQIDLTSI.

The protein belongs to the universal ribosomal protein uL1 family. In terms of assembly, part of the 50S ribosomal subunit.

In terms of biological role, binds directly to 23S rRNA. The L1 stalk is quite mobile in the ribosome, and is involved in E site tRNA release. Functionally, protein L1 is also a translational repressor protein, it controls the translation of the L11 operon by binding to its mRNA. The chain is Large ribosomal subunit protein uL1 from Rickettsia typhi (strain ATCC VR-144 / Wilmington).